The primary structure comprises 86 residues: MVKIRLARHGSKKRPFYQIVVSDSRNARDGRFLENVGFFNPVASGKAEKLRLNIDRIEHWKNVGAELSERVQALVKAEKKNLQTAS.

The protein belongs to the bacterial ribosomal protein bS16 family.

This is Small ribosomal subunit protein bS16 from Hamiltonella defensa subsp. Acyrthosiphon pisum (strain 5AT).